A 322-amino-acid chain; its full sequence is N-acetyl-gamma-glutamyl-phosphate reductase (322 aa).

Cys132 is a catalytic residue.

It belongs to the NAGSA dehydrogenase family. Type 1 subfamily.

Its subcellular location is the cytoplasm. It carries out the reaction N-acetyl-L-glutamate 5-semialdehyde + phosphate + NADP(+) = N-acetyl-L-glutamyl 5-phosphate + NADPH + H(+). Its pathway is amino-acid biosynthesis; L-arginine biosynthesis; N(2)-acetyl-L-ornithine from L-glutamate: step 3/4. In terms of biological role, catalyzes the NADPH-dependent reduction of N-acetyl-5-glutamyl phosphate to yield N-acetyl-L-glutamate 5-semialdehyde. The protein is N-acetyl-gamma-glutamyl-phosphate reductase of Phocaeicola vulgatus (strain ATCC 8482 / DSM 1447 / JCM 5826 / CCUG 4940 / NBRC 14291 / NCTC 11154) (Bacteroides vulgatus).